The sequence spans 129 residues: Large ribosomal subunit protein bL19 (129 aa).

Belongs to the bacterial ribosomal protein bL19 family.

In terms of biological role, this protein is located at the 30S-50S ribosomal subunit interface and may play a role in the structure and function of the aminoacyl-tRNA binding site. This chain is Large ribosomal subunit protein bL19, found in Methylobacillus flagellatus (strain ATCC 51484 / DSM 6875 / VKM B-1610 / KT).